The primary structure comprises 115 residues: Large ribosomal subunit protein bL20 (115 aa).

This sequence belongs to the bacterial ribosomal protein bL20 family.

Functionally, binds directly to 23S ribosomal RNA and is necessary for the in vitro assembly process of the 50S ribosomal subunit. It is not involved in the protein synthesizing functions of that subunit. In Borrelia duttonii (strain Ly), this protein is Large ribosomal subunit protein bL20.